The chain runs to 309 residues: Probable porphobilinogen deaminase (309 aa).

The residue at position 233 (Cys-233) is an S-(dipyrrolylmethanemethyl)cysteine.

Belongs to the HMBS family. It depends on dipyrromethane as a cofactor.

It catalyses the reaction 4 porphobilinogen + H2O = hydroxymethylbilane + 4 NH4(+). It functions in the pathway porphyrin-containing compound metabolism; protoporphyrin-IX biosynthesis; coproporphyrinogen-III from 5-aminolevulinate: step 2/4. Its function is as follows. Tetrapolymerization of the monopyrrole PBG into the hydroxymethylbilane pre-uroporphyrinogen in several discrete steps. This is Probable porphobilinogen deaminase from Methanococcoides burtonii (strain DSM 6242 / NBRC 107633 / OCM 468 / ACE-M).